The following is a 305-amino-acid chain: Homoserine kinase (305 aa).

90–100 (PLARGLGSSAS) is a binding site for ATP.

It belongs to the GHMP kinase family. Homoserine kinase subfamily.

The protein localises to the cytoplasm. The catalysed reaction is L-homoserine + ATP = O-phospho-L-homoserine + ADP + H(+). Its pathway is amino-acid biosynthesis; L-threonine biosynthesis; L-threonine from L-aspartate: step 4/5. In terms of biological role, catalyzes the ATP-dependent phosphorylation of L-homoserine to L-homoserine phosphate. This Staphylococcus saprophyticus subsp. saprophyticus (strain ATCC 15305 / DSM 20229 / NCIMB 8711 / NCTC 7292 / S-41) protein is Homoserine kinase.